We begin with the raw amino-acid sequence, 61 residues long: Translational regulator CsrA (61 aa).

Belongs to the CsrA/RsmA family. Homodimer; the beta-strands of each monomer intercalate to form a hydrophobic core, while the alpha-helices form wings that extend away from the core.

The protein resides in the cytoplasm. A key translational regulator that binds mRNA to regulate translation initiation and/or mRNA stability. Mediates global changes in gene expression, shifting from rapid growth to stress survival by linking envelope stress, the stringent response and the catabolite repression systems. Usually binds in the 5'-UTR; binding at or near the Shine-Dalgarno sequence prevents ribosome-binding, repressing translation, binding elsewhere in the 5'-UTR can activate translation and/or stabilize the mRNA. Its function is antagonized by small RNA(s). The sequence is that of Translational regulator CsrA from Actinobacillus succinogenes (strain ATCC 55618 / DSM 22257 / CCUG 43843 / 130Z).